The sequence spans 705 residues: Beta-xylosidase (705 aa).

Belongs to the glycosyl hydrolase 52 family.

The enzyme catalyses Hydrolysis of (1-&gt;4)-beta-D-xylans, to remove successive D-xylose residues from the non-reducing termini.. It participates in glycan degradation; xylan degradation. This chain is Beta-xylosidase (xylA), found in Geobacillus stearothermophilus (Bacillus stearothermophilus).